Consider the following 178-residue polypeptide: Gamma-crystallin S (178 aa).

An N-acetylserine modification is found at Ser-2. The N-terminal arm stretch occupies residues 2-5 (SKTG). 2 Beta/gamma crystallin 'Greek key' domains span residues 6–44 (GKISFYEDRNFQGRRYDCDCDCADFRSYLSRCNSIRVEG) and 45–87 (GTWA…RAVH). Residues 88–93 (LSSGGQ) form a connecting peptide region. Beta/gamma crystallin 'Greek key' domains follow at residues 94–134 (AKIQ…KVVE) and 135–177 (GTWI…RRIV).

The protein belongs to the beta/gamma-crystallin family. In terms of assembly, monomer.

Its function is as follows. Crystallins are the dominant structural components of the vertebrate eye lens. The protein is Gamma-crystallin S (Crygs) of Mus musculus (Mouse).